Reading from the N-terminus, the 144-residue chain is HMG1/2-like protein (144 aa).

Disordered stretches follow at residues 1-42 and 85-144; these read MKGG…PPSA and PFIS…EDDD. Basic and acidic residues-rich tracts occupy residues 8–35 and 89–99; these read AKSDNKLAVKKQAADTKKTKKAVKDPNK and KAEKRKQEYEK. Positions 36-105 form a DNA-binding region, HMG box; it reads PKRPPSAFFV…EYEKNLQAYN (70 aa). Positions 126–144 are enriched in acidic residues; it reads NDDDEDQDGSGEDDSEDDD.

It belongs to the HMGB family. In terms of tissue distribution, expressed at higher levels in dark-grown tissues, such as roots; and at lower levels in light-grown tissues, such as cotyledons and stems.

The protein localises to the nucleus. This chain is HMG1/2-like protein, found in Ipomoea nil (Japanese morning glory).